The primary structure comprises 421 residues: F-box protein At2g17690 (421 aa).

The 49-residue stretch at 2–50 (GDWSKLPEELLGLIALRLYSVIELIRFRSICKSWRSSASGVNKNHSLSS) folds into the F-box domain.

Involved in heat stress response. Contributes to recovery from heat stress. This is F-box protein At2g17690 from Arabidopsis thaliana (Mouse-ear cress).